A 159-amino-acid chain; its full sequence is 6,7-dimethyl-8-ribityllumazine synthase (159 aa).

5-amino-6-(D-ribitylamino)uracil contacts are provided by residues Trp-26, 58–60 (AIE), and 80–82 (VVI). 85-86 (ET) contacts (2S)-2-hydroxy-3-oxobutyl phosphate. His-88 functions as the Proton donor in the catalytic mechanism. Position 113 (Asn-113) interacts with 5-amino-6-(D-ribitylamino)uracil. Position 127 (Arg-127) interacts with (2S)-2-hydroxy-3-oxobutyl phosphate.

This sequence belongs to the DMRL synthase family. As to quaternary structure, homopentamer.

The enzyme catalyses (2S)-2-hydroxy-3-oxobutyl phosphate + 5-amino-6-(D-ribitylamino)uracil = 6,7-dimethyl-8-(1-D-ribityl)lumazine + phosphate + 2 H2O + H(+). Its pathway is cofactor biosynthesis; riboflavin biosynthesis; riboflavin from 2-hydroxy-3-oxobutyl phosphate and 5-amino-6-(D-ribitylamino)uracil: step 1/2. Functionally, catalyzes the formation of 6,7-dimethyl-8-ribityllumazine by condensation of 5-amino-6-(D-ribitylamino)uracil with 3,4-dihydroxy-2-butanone 4-phosphate. This is the penultimate step in the biosynthesis of riboflavin. This is 6,7-dimethyl-8-ribityllumazine synthase from Mycolicibacterium gilvum (strain PYR-GCK) (Mycobacterium gilvum (strain PYR-GCK)).